We begin with the raw amino-acid sequence, 366 residues long: Ribosomal RNA large subunit methyltransferase M (366 aa).

S-adenosyl-L-methionine is bound by residues Ser188, 221–224 (CPGG), Asp240, Asp260, and Asp277. Catalysis depends on Lys306, which acts as the Proton acceptor.

Belongs to the class I-like SAM-binding methyltransferase superfamily. RNA methyltransferase RlmE family. RlmM subfamily. Monomer.

It is found in the cytoplasm. It catalyses the reaction cytidine(2498) in 23S rRNA + S-adenosyl-L-methionine = 2'-O-methylcytidine(2498) in 23S rRNA + S-adenosyl-L-homocysteine + H(+). Catalyzes the 2'-O-methylation at nucleotide C2498 in 23S rRNA. The chain is Ribosomal RNA large subunit methyltransferase M from Shigella dysenteriae serotype 1 (strain Sd197).